The following is a 2045-amino-acid chain: Non-reducing polyketide synthase pks27 (2045 aa).

The interval 10–247 (IVFGDLTCDS…LTIPIYAPYH (238 aa)) is N-terminal acylcarrier protein transacylase domain (SAT). Residues 380-813 (HSKLAIIGYS…GGNSSVLIED (434 aa)) enclose the Ketosynthase family 3 (KS3) domain. Active-site for beta-ketoacyl synthase activity residues include cysteine 552, histidine 687, and histidine 731. A malonyl-CoA:ACP transacylase (MAT) domain region spans residues 913–1213 (FAFTGQGSQY…VPTLQRNKDT (301 aa)). The segment at 1289 to 1422 (HKLVEEKKDG…ASITFPDAKA (134 aa)) is N-terminal hotdog fold. The PKS/mFAS DH domain maps to 1289–1599 (HKLVEEKKDG…AQGVPRRLMD (311 aa)). Histidine 1321 serves as the catalytic Proton acceptor; for dehydratase activity. Residues 1442 to 1599 (AARLNTDDRV…AQGVPRRLMD (158 aa)) form a C-terminal hotdog fold region. The active-site Proton donor; for dehydratase activity is aspartate 1511. The tract at residues 1612-1636 (APAGGTLNASQSAAANPAADPSAQA) is disordered. Positions 1619-1636 (NASQSAAANPAADPSAQA) are enriched in low complexity. The Carrier domain occupies 1635-1712 (QADSDNWQAA…ELEAFWKQGA (78 aa)). The product template (PT) domain stretch occupies residues 1640-1709 (NWQAALKIIS…TIKELEAFWK (70 aa)). An O-(pantetheine 4'-phosphoryl)serine modification is found at serine 1672. Residues 1735–1776 (EAEVDQDKNSSDEDRSSLGTSSYEVISPNTTETTPEITKTSS) are disordered. Residues 1739–1750 (DQDKNSSDEDRS) are compositionally biased toward basic and acidic residues. Over residues 1760–1776 (ISPNTTETTPEITKTSS) the composition is skewed to low complexity. Positions 1798–2039 (TLFLLPDGSG…AKRLSEMIEG (242 aa)) are thioesterase.

Pantetheine 4'-phosphate serves as cofactor.

The protein operates within secondary metabolite biosynthesis. In terms of biological role, non-reducing polyketide synthase (NRPKS); part of the gene cluster 27 that mediates the biosynthesis of asparasone A, a sclerotium-specific anthraquinone pigment important for sclerotial survival. Catalyzes the formation of the aromatic polyketide from acetyl coenzyme A and seven malonyl coenzyme A molecules. Through its product template (PT) domain, catalyzes the cyclization of polyketide backbone via C6-C11 aldolcondensation. This is Non-reducing polyketide synthase pks27 from Aspergillus flavus (strain ATCC 200026 / FGSC A1120 / IAM 13836 / NRRL 3357 / JCM 12722 / SRRC 167).